The sequence spans 555 residues: Chaperonin GroEL (555 aa).

Residues 29–32 (TLGP), Lys50, 86–90 (DGTTT), Gly418, and Asp499 each bind ATP. A disordered region spans residues 528–555 (HEEDNNTGNRSGGGVGGGHHGGMGGMDF). Positions 537 to 555 (RSGGGVGGGHHGGMGGMDF) are enriched in gly residues.

It belongs to the chaperonin (HSP60) family. Forms a cylinder of 14 subunits composed of two heptameric rings stacked back-to-back. Interacts with the co-chaperonin GroES.

Its subcellular location is the cytoplasm. It catalyses the reaction ATP + H2O + a folded polypeptide = ADP + phosphate + an unfolded polypeptide.. Together with its co-chaperonin GroES, plays an essential role in assisting protein folding. The GroEL-GroES system forms a nano-cage that allows encapsulation of the non-native substrate proteins and provides a physical environment optimized to promote and accelerate protein folding. The polypeptide is Chaperonin GroEL (Orientia tsutsugamushi (strain Ikeda) (Rickettsia tsutsugamushi)).